Here is a 233-residue protein sequence, read N- to C-terminus: Cytidylate kinase (233 aa).

Position 15 to 23 (15 to 23 (GPSGAGKSS)) interacts with ATP. Over residues 183-200 (QRDRQDEGREHAPLKQAE) the composition is skewed to basic and acidic residues. Residues 183–203 (QRDRQDEGREHAPLKQAEDAV) form a disordered region.

The protein belongs to the cytidylate kinase family. Type 1 subfamily.

It is found in the cytoplasm. The catalysed reaction is CMP + ATP = CDP + ADP. The enzyme catalyses dCMP + ATP = dCDP + ADP. The chain is Cytidylate kinase from Geobacter sp. (strain M21).